A 364-amino-acid chain; its full sequence is Peptide chain release factor 2 (364 aa).

Position 251 is an N5-methylglutamine (Q251).

It belongs to the prokaryotic/mitochondrial release factor family. Post-translationally, methylated by PrmC. Methylation increases the termination efficiency of RF2.

It is found in the cytoplasm. Peptide chain release factor 2 directs the termination of translation in response to the peptide chain termination codons UGA and UAA. This Buchnera aphidicola subsp. Schizaphis graminum (strain Sg) protein is Peptide chain release factor 2 (prfB).